Consider the following 86-residue polypeptide: UPF0473 protein Clos_1662 (86 aa).

Belongs to the UPF0473 family.

This chain is UPF0473 protein Clos_1662, found in Alkaliphilus oremlandii (strain OhILAs) (Clostridium oremlandii (strain OhILAs)).